Consider the following 122-residue polypeptide: ATP synthase epsilon chain (122 aa).

Belongs to the ATPase epsilon chain family. As to quaternary structure, F-type ATPases have 2 components, CF(1) - the catalytic core - and CF(0) - the membrane proton channel. CF(1) has five subunits: alpha(3), beta(3), gamma(1), delta(1), epsilon(1). CF(0) has three main subunits: a, b and c.

It localises to the cell membrane. Functionally, produces ATP from ADP in the presence of a proton gradient across the membrane. The sequence is that of ATP synthase epsilon chain from Rhodococcus jostii (strain RHA1).